The primary structure comprises 238 residues: Ion-translocating oxidoreductase complex subunit E (238 aa).

5 helical membrane-spanning segments follow: residues 41–61 (LGLG…VSLV), 71–91 (LPAF…LMQA), 95–115 (ELYQ…VILG), 130–150 (SFDG…LGGL), and 184–204 (GFLL…LIAL).

It belongs to the NqrDE/RnfAE family. As to quaternary structure, the complex is composed of six subunits: RnfA, RnfB, RnfC, RnfD, RnfE and RnfG.

The protein resides in the cell inner membrane. Part of a membrane-bound complex that couples electron transfer with translocation of ions across the membrane. In Pseudomonas aeruginosa (strain LESB58), this protein is Ion-translocating oxidoreductase complex subunit E.